Consider the following 249-residue polypeptide: DNA polymerase sliding clamp (249 aa).

This sequence belongs to the PCNA family. In terms of assembly, homotrimer. The subunits circularize to form a toroid; DNA passes through its center. Replication factor C (RFC) is required to load the toroid on the DNA.

Functionally, sliding clamp subunit that acts as a moving platform for DNA processing. Responsible for tethering the catalytic subunit of DNA polymerase and other proteins to DNA during high-speed replication. This is DNA polymerase sliding clamp from Nanoarchaeum equitans (strain Kin4-M).